Here is a 444-residue protein sequence, read N- to C-terminus: NADH-quinone oxidoreductase subunit F (444 aa).

NAD(+) is bound at residue Gly62–Gly71. Gly177–Thr224 serves as a coordination point for FMN. 4 residues coordinate [4Fe-4S] cluster: Cys354, Cys357, Cys360, and Cys401.

It belongs to the complex I 51 kDa subunit family. In terms of assembly, composed of 13 different subunits. Subunits NuoCD, E, F, and G constitute the peripheral sector of the complex. [4Fe-4S] cluster is required as a cofactor. Requires FMN as cofactor.

The enzyme catalyses a quinone + NADH + 5 H(+)(in) = a quinol + NAD(+) + 4 H(+)(out). Its function is as follows. NDH-1 shuttles electrons from NADH, via FMN and iron-sulfur (Fe-S) centers, to quinones in the respiratory chain. Couples the redox reaction to proton translocation (for every two electrons transferred, four hydrogen ions are translocated across the cytoplasmic membrane), and thus conserves the redox energy in a proton gradient. This Buchnera aphidicola subsp. Baizongia pistaciae (strain Bp) protein is NADH-quinone oxidoreductase subunit F (nuoF).